Reading from the N-terminus, the 267-residue chain is Ribosomal RNA large subunit methyltransferase E (267 aa).

Gly-52, Phe-54, Asp-72, Asp-90, and Asp-114 together coordinate S-adenosyl-L-methionine. The active-site Proton acceptor is the Lys-154. A compositionally biased stretch (low complexity) spans 212–252 (EAPRAPAPPEQAAAPEEATAPATRAARQKPAPAKKPAAAKR). Positions 212 to 267 (EAPRAPAPPEQAAAPEEATAPATRAARQKPAPAKKPAAAKRPAARKRAAKKPARRA) are disordered. The segment covering 253 to 267 (PAARKRAAKKPARRA) has biased composition (basic residues).

This sequence belongs to the class I-like SAM-binding methyltransferase superfamily. RNA methyltransferase RlmE family.

The protein localises to the cytoplasm. It catalyses the reaction uridine(2552) in 23S rRNA + S-adenosyl-L-methionine = 2'-O-methyluridine(2552) in 23S rRNA + S-adenosyl-L-homocysteine + H(+). Specifically methylates the uridine in position 2552 of 23S rRNA at the 2'-O position of the ribose in the fully assembled 50S ribosomal subunit. The polypeptide is Ribosomal RNA large subunit methyltransferase E (Anaeromyxobacter dehalogenans (strain 2CP-C)).